A 662-amino-acid chain; its full sequence is Probable actin-related protein 8 (662 aa).

Composition is skewed to basic and acidic residues over residues 50 to 59 (AGEKDAKETE) and 67 to 77 (TKQDDSKKSQV). A disordered region spans residues 50–92 (AGEKDAKETESESANGDTKQDDSKKSQVEEEEDGIEESELGEE). A compositionally biased stretch (acidic residues) spans 78–89 (EEEEDGIEESEL). Residue 339–342 (DMGA) participates in ATP binding.

The protein belongs to the actin family. Component of the chromatin remodeling Ino80 complex. Exists as monomers and dimers, but the dimer is most probably the biologically relevant form required for stable interactions with histones that exploits the twofold symmetry of the nucleosome core.

It localises to the nucleus. Functionally, probably involved in transcription regulation via its interaction with the INO80 complex, a chromatin remodeling complex. Exhibits low basal ATPase activity, and unable to polymerize. Strongly prefer nucleosomes and H3-H4 tetramers over H2A-H2B dimers, suggesting it may act as a nucleosome recognition module within the complex. The protein is Probable actin-related protein 8 of Schizosaccharomyces pombe (strain 972 / ATCC 24843) (Fission yeast).